A 394-amino-acid polypeptide reads, in one-letter code: S-adenosylmethionine synthase (394 aa).

Histidine 18 provides a ligand contact to ATP. Aspartate 20 contacts Mg(2+). Glutamate 46 contributes to the K(+) binding site. L-methionine-binding residues include glutamate 59 and glutamine 104. The tract at residues 104–114 (QSPDIAQGVDA) is flexible loop. Residues 174 to 176 (DCK), 240 to 241 (KF), aspartate 249, 255 to 256 (RK), alanine 272, and lysine 276 each bind ATP. Aspartate 249 provides a ligand contact to L-methionine. An L-methionine-binding site is contributed by lysine 280.

The protein belongs to the AdoMet synthase family. In terms of assembly, homotetramer; dimer of dimers. Mg(2+) is required as a cofactor. Requires K(+) as cofactor.

It is found in the cytoplasm. It carries out the reaction L-methionine + ATP + H2O = S-adenosyl-L-methionine + phosphate + diphosphate. The protein operates within amino-acid biosynthesis; S-adenosyl-L-methionine biosynthesis; S-adenosyl-L-methionine from L-methionine: step 1/1. Catalyzes the formation of S-adenosylmethionine (AdoMet) from methionine and ATP. The overall synthetic reaction is composed of two sequential steps, AdoMet formation and the subsequent tripolyphosphate hydrolysis which occurs prior to release of AdoMet from the enzyme. This Akkermansia muciniphila (strain ATCC BAA-835 / DSM 22959 / JCM 33894 / BCRC 81048 / CCUG 64013 / CIP 107961 / Muc) protein is S-adenosylmethionine synthase.